A 180-amino-acid polypeptide reads, in one-letter code: Trafficking protein particle complex subunit 3 (180 aa).

Cys-68 carries S-palmitoyl cysteine lipidation.

The protein belongs to the TRAPP small subunits family. BET3 subfamily. As to quaternary structure, homodimer. Component of the multisubunit transport protein particle (TRAPP) complex, which includes at least TRAPPC2, TRAPPC2L, TRAPPC3, TRAPPC3L, TRAPPC4, TRAPPC5, TRAPPC8, TRAPPC9, TRAPPC10, TRAPPC11 and TRAPPC12. Heterodimer with TRAPPC6A. The heterodimer TRAPPC3-TRAPPC6A interacts with TRAPPC2L. Heterodimer with TRAPPC6b. The heterodimer TRAPPC6B-TRAPPC3 interacts with TRAPPC1 likely providing a core for TRAPP complex formation.

The protein localises to the golgi apparatus. Its subcellular location is the cis-Golgi network. It is found in the endoplasmic reticulum. Functionally, may play a role in vesicular transport from endoplasmic reticulum to Golgi. The chain is Trafficking protein particle complex subunit 3 from Homo sapiens (Human).